A 312-amino-acid chain; its full sequence is 4-hydroxyproline 2-epimerase (312 aa).

C88 (proton acceptor) is an active-site residue. Substrate is bound by residues 89-90 (GH), H208, and D234. C238 (proton donor) is an active-site residue. Position 239–240 (239–240 (GT)) interacts with substrate.

It belongs to the proline racemase family.

It carries out the reaction trans-4-hydroxy-L-proline = cis-4-hydroxy-D-proline. Its function is as follows. Catalyzes the epimerization of trans-4-hydroxy-L-proline (t4LHyp) to cis-4-hydroxy-D-proline (c4DHyp). Is likely involved in a degradation pathway that converts t4LHyp to alpha-ketoglutarate. Can also catalyze the epimerization of trans-3-hydroxy-L-proline (t3LHyp) to cis-3-hydroxy-D-proline (c3DHyp), albeit with 500-fold lower efficiency. Displays no proline racemase activity. The protein is 4-hydroxyproline 2-epimerase of Xanthomonas campestris pv. campestris (strain ATCC 33913 / DSM 3586 / NCPPB 528 / LMG 568 / P 25).